A 102-amino-acid polypeptide reads, in one-letter code: ATP-dependent Clp protease adapter protein ClpS (102 aa).

It belongs to the ClpS family. In terms of assembly, binds to the N-terminal domain of the chaperone ClpA.

Involved in the modulation of the specificity of the ClpAP-mediated ATP-dependent protein degradation. This Shewanella woodyi (strain ATCC 51908 / MS32) protein is ATP-dependent Clp protease adapter protein ClpS.